Reading from the N-terminus, the 154-residue chain is Golgi-associated plant pathogenesis-related protein 1 (154 aa).

Residues 1-21 (MGKSASKQFHNEVLKAHNEYR) form a disordered region. Residue Gly-2 is the site of N-myristoyl glycine attachment. A compositionally biased stretch (basic and acidic residues) spans 9–21 (FHNEVLKAHNEYR). The 119-residue stretch at 14–132 (LKAHNEYRQK…SDGSSFVVAR (119 aa)) folds into the SCP domain. A coiled-coil region spans residues 30-53 (KLCKNLNREAQQYSEALASTRILK). The tract at residues 91 to 98 (NFQQPGFT) is interaction with CAV1.

The protein belongs to the CRISP family. As to quaternary structure, homodimer. Interacts with CAV1. In terms of tissue distribution, highest expression in lung and peripheral leukocytes, and minor expression in liver and kidney.

It localises to the golgi apparatus membrane. This is Golgi-associated plant pathogenesis-related protein 1 (GLIPR2) from Homo sapiens (Human).